The following is a 122-amino-acid chain: Large ribosomal subunit protein uL14c (122 aa).

The protein belongs to the universal ribosomal protein uL14 family. In terms of assembly, part of the 50S ribosomal subunit.

The protein resides in the plastid. In terms of biological role, binds to 23S rRNA. The polypeptide is Large ribosomal subunit protein uL14c (Cuscuta gronovii (Common dodder)).